The following is a 174-amino-acid chain: Small t antigen (174 aa).

M1 is subject to N-acetylmethionine; by host. In terms of domain architecture, J spans Q12–G75. The C4-type; atypical zinc finger occupies C103 to C116. The H1C3-type; atypical zinc-finger motif lies at H122–C143.

Interacts with host PPP2R1A; the interaction inhibits PP2A activity.

It is found in the host cytoplasm. It localises to the host nucleus. Promotes efficient viral genome replication by accelerating both G1 and S phase progression of the cell cycle. Inhibits host PP2A by binding to the A subunit, thereby displacing lower affinity regulatory B subunit. Inactivation of PP2A in turn results in the transactivation of cyclin A and cyclin D1 promoters. Late during the infection cycle, ST may induce dephosphorylation of host eIF4E-binding protein EIF4EBP1 leading to the inhibition of cap-dependent translation. May establish and maintain high levels of viral genomes during persistent infection in cell culture. This is Small t antigen from Simian virus 40 (SV40).